We begin with the raw amino-acid sequence, 407 residues long: Transcriptional regulator UL34 (407 aa).

Residues 268 to 330 (AAGPPEADEN…ENEEEEEELF (63 aa)) form a disordered region. The segment covering 273 to 286 (EADENNDEGEEDDD) has biased composition (acidic residues). A compositionally biased stretch (basic and acidic residues) spans 287-301 (ELRHSDPAPLHDSKK). Basic residues predominate over residues 302 to 312 (PRNARRPRTRV).

This sequence belongs to the HHV-5 UL34 protein family.

The protein resides in the host nucleus. Acts as a transcriptional repressor of the US3 gene expression through a specific DNA sequence named the transcriptional repressive element (tre). The sequence is that of Transcriptional regulator UL34 (UL34) from Homo sapiens (Human).